Reading from the N-terminus, the 357-residue chain is D-alanine--D-alanine ligase (357 aa).

The ATP-grasp domain maps to 145 to 339 (KEVMLYHGIQ…YGDLVMDIVN (195 aa)). Position 172–225 (172–225 (PFDFPVVVKPTSGGSSVGTHIIHNQEELESGLEDVFRFDNSAIVEEFTPGREFS)) interacts with ATP. Mg(2+)-binding residues include Asp294, Glu306, and Asn308.

The protein belongs to the D-alanine--D-alanine ligase family. Mg(2+) is required as a cofactor. It depends on Mn(2+) as a cofactor.

The protein localises to the cytoplasm. It catalyses the reaction 2 D-alanine + ATP = D-alanyl-D-alanine + ADP + phosphate + H(+). It functions in the pathway cell wall biogenesis; peptidoglycan biosynthesis. Cell wall formation. In Lacticaseibacillus paracasei (strain ATCC 334 / BCRC 17002 / CCUG 31169 / CIP 107868 / KCTC 3260 / NRRL B-441) (Lactobacillus paracasei), this protein is D-alanine--D-alanine ligase.